The chain runs to 208 residues: Uracil phosphoribosyltransferase (208 aa).

5-phospho-alpha-D-ribose 1-diphosphate-binding positions include arginine 78, arginine 103, and 130–138 (DPMLATGVS). Uracil contacts are provided by residues isoleucine 193 and 198–200 (GDA). Position 199 (aspartate 199) interacts with 5-phospho-alpha-D-ribose 1-diphosphate.

The protein belongs to the UPRTase family. It depends on Mg(2+) as a cofactor.

It carries out the reaction UMP + diphosphate = 5-phospho-alpha-D-ribose 1-diphosphate + uracil. Its pathway is pyrimidine metabolism; UMP biosynthesis via salvage pathway; UMP from uracil: step 1/1. Its activity is regulated as follows. Allosterically activated by GTP. In terms of biological role, catalyzes the conversion of uracil and 5-phospho-alpha-D-ribose 1-diphosphate (PRPP) to UMP and diphosphate. The polypeptide is Uracil phosphoribosyltransferase (Thermosipho melanesiensis (strain DSM 12029 / CIP 104789 / BI429)).